Consider the following 478-residue polypeptide: Cytochrome c-552 (478 aa).

Positions 1 to 26 are cleaved as a signal peptide; it reads MTRIKINARRIFSLLIPFFFFTSVHA. Histidine 94 contributes to the heme c binding site. 3 residues coordinate heme: cysteine 122, cysteine 125, and lysine 126. Heme c contacts are provided by cysteine 160, cysteine 163, histidine 164, cysteine 209, cysteine 212, and histidine 213. The Ca(2+) site is built by glutamate 215, tyrosine 216, lysine 261, and glutamine 263. Tyrosine 216 contacts substrate. Position 264 (histidine 264) interacts with substrate. Heme c contacts are provided by histidine 275, cysteine 282, cysteine 285, histidine 286, histidine 301, cysteine 314, cysteine 317, histidine 318, and histidine 393.

This sequence belongs to the cytochrome c-552 family. Ca(2+) is required as a cofactor. Requires heme c as cofactor.

The protein localises to the periplasm. The enzyme catalyses 6 Fe(III)-[cytochrome c] + NH4(+) + 2 H2O = 6 Fe(II)-[cytochrome c] + nitrite + 8 H(+). The protein operates within nitrogen metabolism; nitrate reduction (assimilation). Functionally, catalyzes the reduction of nitrite to ammonia, consuming six electrons in the process. This chain is Cytochrome c-552, found in Escherichia coli (strain ATCC 8739 / DSM 1576 / NBRC 3972 / NCIMB 8545 / WDCM 00012 / Crooks).